Reading from the N-terminus, the 125-residue chain is Small ribosomal subunit protein uS13 (125 aa).

This sequence belongs to the universal ribosomal protein uS13 family. In terms of assembly, part of the 30S ribosomal subunit. Forms a loose heterodimer with protein S19. Forms two bridges to the 50S subunit in the 70S ribosome.

Its function is as follows. Located at the top of the head of the 30S subunit, it contacts several helices of the 16S rRNA. In the 70S ribosome it contacts the 23S rRNA (bridge B1a) and protein L5 of the 50S subunit (bridge B1b), connecting the 2 subunits; these bridges are implicated in subunit movement. Contacts the tRNAs in the A and P-sites. The chain is Small ribosomal subunit protein uS13 from Granulibacter bethesdensis (strain ATCC BAA-1260 / CGDNIH1).